The primary structure comprises 137 residues: SMR2 protein (137 aa).

An N-terminal signal peptide occupies residues 1–18; it reads MLVVLLTAALLALSSAQN. The interval 14–113 is disordered; the sequence is SSAQNTDEEV…LHHRENLRPQ (100 aa). Over residues 75–85 the composition is skewed to low complexity; it reads QQQQPLPVENQ. Over residues 99–110 the composition is skewed to basic and acidic residues; the sequence is PPPETLHHRENL.

Its subcellular location is the secreted. In terms of biological role, unknown, male-specific function. This is SMR2 protein (Smr2) from Rattus norvegicus (Rat).